A 483-amino-acid chain; its full sequence is Protein EFFECTOR OF TRANSCRIPTION 2 (483 aa).

Residues 64–112 form the GIY-YIG domain; sequence SCPGLYELGVAVIGQEQCRKLEPDIVLASYLGQAESVRSRLQRYGRSGA. Cx9Cx9RCx2HK repeat units lie at residues 278–303 and 338–363; these read CGVLLEDGGCCIRSPVKGRKRCIEHK and CGVILPDMEPCNKRPVPGRKRCEDHK. Over residues 380-396 the composition is skewed to basic and acidic residues; sequence EKTVKDEKPDPESHTES. Residues 380 to 399 are disordered; the sequence is EKTVKDEKPDPESHTESIEE. Cx9Cx9RCx2HK repeat units lie at residues 406-431 and 453-478; these read CEATTKNGLPCTRSSPKGSKRCWQHK and CGVKLGNGLICERSPVKGRKRCEEHK.

Expressed in vascular tissues of stems, hypocotyls, leaves and flowers. Expressed in the vascular bundles of xylem in shoot parenchyma cells. Expressed in the remnant cytoplasm of differentiated fiber cells and in protoxylem element of parenchymal cells.

It localises to the cytoplasm. It is found in the nucleus. Functionally, transcriptional regulator involved in the regulation of cell differentiation in meristems. Probably regulates the expression of various KNAT genes involved in the maintenance of the cells in an undifferentiated, merismastic state. Plays a role in the regulation of gibberellin 20 oxidase and the gibberellin-regulated protein GASA4. Localizes in the nucleus during the cellular differentiation state and may act via a single strand cutting domain. Transcriptional regulator required for the induction of dormancy during late seed development. Interacts genetically with FUS3 and may be component of the same regulatory pathway during embryogenesis. Binds both linear and supercoiled DNA without sequence preference. The polypeptide is Protein EFFECTOR OF TRANSCRIPTION 2 (Arabidopsis thaliana (Mouse-ear cress)).